A 544-amino-acid polypeptide reads, in one-letter code: Chaperonin GroEL (544 aa).

ATP contacts are provided by residues 29–32, K50, 86–90, G413, 479–481, and D495; these read TLGP, DGTTT, and DAA.

The protein belongs to the chaperonin (HSP60) family. In terms of assembly, forms a cylinder of 14 subunits composed of two heptameric rings stacked back-to-back. Interacts with the co-chaperonin GroES.

The protein localises to the cytoplasm. It catalyses the reaction ATP + H2O + a folded polypeptide = ADP + phosphate + an unfolded polypeptide.. Its function is as follows. Together with its co-chaperonin GroES, plays an essential role in assisting protein folding. The GroEL-GroES system forms a nano-cage that allows encapsulation of the non-native substrate proteins and provides a physical environment optimized to promote and accelerate protein folding. The protein is Chaperonin GroEL of Borrelia turicatae (strain 91E135).